A 365-amino-acid chain; its full sequence is DNA replication and repair protein RecF (365 aa).

G30 to T37 provides a ligand contact to ATP.

Belongs to the RecF family.

The protein localises to the cytoplasm. In terms of biological role, the RecF protein is involved in DNA metabolism; it is required for DNA replication and normal SOS inducibility. RecF binds preferentially to single-stranded, linear DNA. It also seems to bind ATP. This is DNA replication and repair protein RecF from Parabacteroides distasonis (strain ATCC 8503 / DSM 20701 / CIP 104284 / JCM 5825 / NCTC 11152).